The sequence spans 455 residues: Bifunctional protein GlmU (455 aa).

The pyrophosphorylase stretch occupies residues 1–226; the sequence is MSLDIVILAA…AMEVQGANDR (226 aa). Residues 8 to 11, lysine 22, glutamine 73, 78 to 79, 99 to 101, glycine 136, glutamate 151, asparagine 166, and asparagine 224 contribute to the UDP-N-acetyl-alpha-D-glucosamine site; these read LAAG, GT, and YGD. Residue aspartate 101 participates in Mg(2+) binding. A Mg(2+)-binding site is contributed by asparagine 224. Residues 227–247 form a linker region; the sequence is RQLSELERHYQLREGRRLMAQ. Residues 248–455 are N-acetyltransferase; sequence GVTLRDPARF…WKRPEKIKKS (208 aa). UDP-N-acetyl-alpha-D-glucosamine contacts are provided by arginine 330 and lysine 348. The active-site Proton acceptor is the histidine 360. Tyrosine 363 and asparagine 374 together coordinate UDP-N-acetyl-alpha-D-glucosamine. Acetyl-CoA-binding positions include alanine 377, 383–384, serine 402, alanine 420, and arginine 437; that span reads NY.

The protein in the N-terminal section; belongs to the N-acetylglucosamine-1-phosphate uridyltransferase family. This sequence in the C-terminal section; belongs to the transferase hexapeptide repeat family. In terms of assembly, homotrimer. The cofactor is Mg(2+).

It localises to the cytoplasm. The catalysed reaction is alpha-D-glucosamine 1-phosphate + acetyl-CoA = N-acetyl-alpha-D-glucosamine 1-phosphate + CoA + H(+). It catalyses the reaction N-acetyl-alpha-D-glucosamine 1-phosphate + UTP + H(+) = UDP-N-acetyl-alpha-D-glucosamine + diphosphate. It functions in the pathway nucleotide-sugar biosynthesis; UDP-N-acetyl-alpha-D-glucosamine biosynthesis; N-acetyl-alpha-D-glucosamine 1-phosphate from alpha-D-glucosamine 6-phosphate (route II): step 2/2. Its pathway is nucleotide-sugar biosynthesis; UDP-N-acetyl-alpha-D-glucosamine biosynthesis; UDP-N-acetyl-alpha-D-glucosamine from N-acetyl-alpha-D-glucosamine 1-phosphate: step 1/1. It participates in bacterial outer membrane biogenesis; LPS lipid A biosynthesis. Catalyzes the last two sequential reactions in the de novo biosynthetic pathway for UDP-N-acetylglucosamine (UDP-GlcNAc). The C-terminal domain catalyzes the transfer of acetyl group from acetyl coenzyme A to glucosamine-1-phosphate (GlcN-1-P) to produce N-acetylglucosamine-1-phosphate (GlcNAc-1-P), which is converted into UDP-GlcNAc by the transfer of uridine 5-monophosphate (from uridine 5-triphosphate), a reaction catalyzed by the N-terminal domain. This Pseudomonas putida (strain ATCC 700007 / DSM 6899 / JCM 31910 / BCRC 17059 / LMG 24140 / F1) protein is Bifunctional protein GlmU.